Here is a 236-residue protein sequence, read N- to C-terminus: Cyclin-P3-1 (236 aa).

It belongs to the cyclin family. Cyclin U/P subfamily.

This is Cyclin-P3-1 (CYCP3-1) from Oryza sativa subsp. japonica (Rice).